Here is a 207-residue protein sequence, read N- to C-terminus: Large ribosomal subunit protein uL3c (207 aa).

The disordered stretch occupies residues 115–151 (IGKGFAGNQKRHNFSRGPMTHGSKNHRLPGSIGAGST).

It belongs to the universal ribosomal protein uL3 family. As to quaternary structure, part of the 50S ribosomal subunit.

The protein resides in the plastid. It localises to the chloroplast. Functionally, one of the primary rRNA binding proteins, it binds directly near the 3'-end of the 23S rRNA, where it nucleates assembly of the 50S subunit. The chain is Large ribosomal subunit protein uL3c (rpl3) from Emiliania huxleyi (Coccolithophore).